A 215-amino-acid chain; its full sequence is MSLPDSPLQLIGILFLLSILPLIIVMGTSFLKLAVVFSILRNALGIQQVPPNIALYGLALVLSLFIMGPTLLAVKERWHPVQVAGAPFWTSEWDSKALAPYRQFLQKNSEEKEANYFRNLIKRTWPEDIKRKIKPDSLLILIPAFTVSQLTQAFRIGLLIYLPFLAIDLLISNILLAMGMMMVSPMTISLPFKLLIFLLAGGWDLTLAQLVQSFS.

The next 4 membrane-spanning stretches (helical) occupy residues 10–30, 53–73, 156–176, and 188–208; these read LIGILFLLSILPLIIVMGTSF, IALYGLALVLSLFIMGPTLLA, IGLLIYLPFLAIDLLISNILL, and ISLPFKLLIFLLAGGWDLTLA.

Belongs to the FliP/MopC/SpaP family.

It localises to the cell membrane. The protein is Virulence protein YscR (yscR) of Salmonella typhimurium (strain LT2 / SGSC1412 / ATCC 700720).